The following is a 710-amino-acid chain: Interferon-induced GTP-binding protein Mx2 (710 aa).

The disordered stretch occupies residues 1–51; that stretch reads MSMSFRPLKYKRHTQTSTQHHPKQDIYFHQQPPGPPLGQTMSPPQWQVEES. A compositionally biased stretch (polar residues) spans 39–50; that stretch reads QTMSPPQWQVEE. A Dynamin-type G domain is found at 112–383; it reads DLALPAIAVI…LIWHINKSLP (272 aa). The interval 122 to 129 is G1 motif; that stretch reads GDQSSGKS. 122–129 serves as a coordination point for GTP; it reads GDQSSGKS. The tract at residues 147-149 is G2 motif; that stretch reads ITR. The segment at 221–224 is G3 motif; it reads DLPG. GTP contacts are provided by residues 221-225 and 290-293; these read DLPGI and TKPD. A G4 motif region spans residues 290 to 293; that stretch reads TKPD. Positions 322 to 325 are G5 motif; it reads KCRG. One can recognise a GED domain in the interval 619–710; it reads IVEIGVHLNA…ALYEFPHFKG (92 aa).

This sequence belongs to the TRAFAC class dynamin-like GTPase superfamily. Dynamin/Fzo/YdjA family.

It localises to the cytoplasm. The protein localises to the nucleus. Interferon-induced dynamin-like GTPase with antiviral activity against vesicular stomatitis virus (VSV). The polypeptide is Interferon-induced GTP-binding protein Mx2 (MX2) (Bos taurus (Bovine)).